Here is a 901-residue protein sequence, read N- to C-terminus: MSILVRPPKRRLADTENLDQNHRRVLRDFGQGNSASTPINTSADYGRFDERPGSGDGSRYASPFQELSSSQGSLTRVEDSLQTRRKFPPNASIVLIGIRGTGKSSLAVMLAASYGRRVIEADLYFQRVTGRCRGVYKREHTLSEYRRQEAIVMESLLMEHQENCVIVCGPGDVERNGQMRLREYAKTHPVIHIVRDLESIQSYLKARDTEKVRRFLELSGPIYRSCSNLEFFNVSEKGISDQPSAKDSQHYTQWDAEVDQRTQTTTPFLMLKRLQRDFLRFVALATGNIPELRNQLSPFPLHMQPIESRKFTYAATVPISHLLENDVDIEELESTADAFELKIDVSAAPSARLGTESNLADSISHTVATVRRNIIVPMIYHVESSVFPDSAPLRRSDASYLELVLHGLRLGPEFVTVDLSFEDSILSQIIGTKGSSKVIGHYSQTQPPPQGWSDPEYEAIYERAKKLGCDMVRLTQPATTIDDNFAVERFRHQIKTLPGPQLPVIAYNSGPLGRQSCCFNPVLTPVIPRSLISQSGTKGLPSITIQEAQEALYSSFVLDPMQFFVFGANTTYSLSPAMHNAAFKVRGMPHIYRIHQSPTLRGINYLVENPNFGGTSVSLPYKTEVIPLLHSMSPHARAIGAVNTLIPIRNLEGSTDNALDLEKNRAGPIKGLHGDNTDWIGIGICIRRGLSPANAIRPSTTGLIIGAGGMARAGIYAMIHLGVQNIFIWNRTVANAEKLAQHYMRLNLCTLGGSGSASYTIHVLKSLQESWPANYKQPTIVVSGIPAHRIGDQPAPNFQLPPQWIESPTGGVVVDLAYKPLNTPLMRQIRSLSHRGWAALDGLDVLPEQGFAQFELFTGCRAPRRLMRTVILQEYKEEEQGEEYDQSAMRTRLENLDGQPM.

Residues 1–88 (MSILVRPPKR…DSLQTRRKFP (88 aa)) are sufficient for repression. Disordered stretches follow at residues 26–59 (LRDF…DGSR) and 878–901 (EEQG…GQPM). Residues 31–43 (QGNSASTPINTSA) show a composition bias toward polar residues.

This sequence in the N-terminal section; belongs to the shikimate kinase family. It in the 2nd section; belongs to the type-I 3-dehydroquinase family. In the C-terminal section; belongs to the shikimate dehydrogenase family. As to quaternary structure, interacts with qutA; transcriptional activator of the quinate utilization pathway genes.

Multi-domain repressor protein that negatively regulates transcription of the quinate utilization pathway genes. May mediate its repressor activity by binding directly to the qutA activator protein. This chain is Quinate repressor protein (qutR), found in Emericella nidulans (strain FGSC A4 / ATCC 38163 / CBS 112.46 / NRRL 194 / M139) (Aspergillus nidulans).